Consider the following 125-residue polypeptide: Glycine cleavage system H protein (125 aa).

The region spanning 23–104 (VVYIGITDYA…PYENWILKVK (82 aa)) is the Lipoyl-binding domain. Residue Lys-64 is modified to N6-lipoyllysine.

It belongs to the GcvH family. The glycine cleavage system is composed of four proteins: P, T, L and H. (R)-lipoate is required as a cofactor.

Functionally, the glycine cleavage system catalyzes the degradation of glycine. The H protein shuttles the methylamine group of glycine from the P protein to the T protein. This Clostridioides difficile (strain 630) (Peptoclostridium difficile) protein is Glycine cleavage system H protein.